Consider the following 349-residue polypeptide: MKFLDEAKVYIRSGDGGNGCVAFRREKYIEFGGPSGGNGGRGGDVIIEVADGLNTLIDYRYQQHFKAQKGTNGMGKDRHGANGKDIVLKVPVGTQILDEDRETLIHDFTKLGERFVLAEGGNGGFGNAHFKSSTNRAPRNANPGQEGEERWIWLRLKLIADAGLVGLPNAGKSTLLSVVSAAKPKIADYPFTTLHPQLGVVDVDGREFVLADIPGLIEGAHEGAGLGDRFLGHVERCQVLLHLVDATCEHAGKAYKTVRNELMAYAGELTDKVEIVALNKIDAVEADELKKQKDRLKRAAKKTPLLISGVAGTGVKEALRALVEVIGEAPVSEKAKGAAQAEPWAPQNV.

Positions 1–159 (MKFLDEAKVY…RWIWLRLKLI (159 aa)) constitute an Obg domain. The 168-residue stretch at 160-327 (ADAGLVGLPN…ALRALVEVIG (168 aa)) folds into the OBG-type G domain. Residues 166–173 (GLPNAGKS), 191–195 (FTTLH), 212–215 (DIPG), 279–282 (NKID), and 308–310 (SGV) contribute to the GTP site. Mg(2+) contacts are provided by serine 173 and threonine 193.

It belongs to the TRAFAC class OBG-HflX-like GTPase superfamily. OBG GTPase family. As to quaternary structure, monomer. The cofactor is Mg(2+).

It is found in the cytoplasm. An essential GTPase which binds GTP, GDP and possibly (p)ppGpp with moderate affinity, with high nucleotide exchange rates and a fairly low GTP hydrolysis rate. Plays a role in control of the cell cycle, stress response, ribosome biogenesis and in those bacteria that undergo differentiation, in morphogenesis control. This is GTPase Obg from Rhodopseudomonas palustris (strain BisB18).